The sequence spans 347 residues: MIYRYLRPWLFKLEPETAHALTLNCLKWFYCYWLINRRLQRFPQKPTVVFGIEFPNPVGLAAGLDKNGEYMDELLGLGFGFIEVGAVTPKPQPGNSKPRIFRLPQARALINRMGFNNLGVDYLVEQLKRRKVKGIVGVNIGKNLTTPLEKAHEDYQNCFEKLYSYVDYVTINISSPNTPELRQLQSERYLADLLTRLKEDQRRLEDQYHKRVPLFLKIAPDLTPEEIQTIATLALQHRIEGIVATNTSCSRQGTEKLPNANEAGGLSGKPLFPMTLQVVKQLHSFLGDEIPIVAVGGIFSGENAQTLINAGARLVQLYTGLIYEGPELVKNIVEFLTLSRQTREGIN.

FMN-binding positions include 62–66 (AGLDK) and Ala86. Residue Lys66 coordinates substrate. Residue 111–115 (NRMGF) participates in substrate binding. Residues Asn139 and Asn172 each contribute to the FMN site. Position 172 (Asn172) interacts with substrate. Catalysis depends on Ser175, which acts as the Nucleophile. Asn177 contributes to the substrate binding site. The FMN site is built by Lys217 and Thr245. 246 to 247 (NT) contacts substrate. FMN-binding positions include Gly268, Gly297, and 318–319 (YT).

It belongs to the dihydroorotate dehydrogenase family. Type 2 subfamily. In terms of assembly, monomer. It depends on FMN as a cofactor.

The protein localises to the cell membrane. The enzyme catalyses (S)-dihydroorotate + a quinone = orotate + a quinol. It participates in pyrimidine metabolism; UMP biosynthesis via de novo pathway; orotate from (S)-dihydroorotate (quinone route): step 1/1. Catalyzes the conversion of dihydroorotate to orotate with quinone as electron acceptor. This is Dihydroorotate dehydrogenase (quinone) from Coxiella burnetii (strain CbuK_Q154) (Coxiella burnetii (strain Q154)).